The chain runs to 269 residues: GTP cyclohydrolase FolE2 (269 aa).

It belongs to the GTP cyclohydrolase IV family.

The enzyme catalyses GTP + H2O = 7,8-dihydroneopterin 3'-triphosphate + formate + H(+). It functions in the pathway cofactor biosynthesis; 7,8-dihydroneopterin triphosphate biosynthesis; 7,8-dihydroneopterin triphosphate from GTP: step 1/1. Its function is as follows. Converts GTP to 7,8-dihydroneopterin triphosphate. In Azoarcus sp. (strain BH72), this protein is GTP cyclohydrolase FolE2.